We begin with the raw amino-acid sequence, 593 residues long: Maternal uncoordinated protein 2 (593 aa).

It belongs to the SCC4/mau-2 family. In terms of assembly, may heterodimerize with scc-2/SCC2 to form the cohesin loading complex.

The protein resides in the nucleus. Its subcellular location is the nucleoplasm. The protein localises to the cytoplasm. In terms of biological role, plays an important role in the loading of the cohesin complex on to DNA. Forms a heterodimeric complex (also known as cohesin loading complex) with scc-2/SCC2 which mediates the loading of the cohesin complex onto chromatin. Required for normal development until the fourth larval stage. Functions cell autonomously to guide migrations during the development of the nervous system. Participates in the guidance of mechanosensory neuron AVM by a slt-1-independent mechanism. Regulates chromosome segregation in early embryos. The protein is Maternal uncoordinated protein 2 of Caenorhabditis elegans.